Consider the following 3527-residue polypeptide: BEACH domain-containing protein A2 (3527 aa).

3 disordered regions span residues 25 to 46 (AGEAISDPTTPPSSSQASPSSS), 385 to 423 (SSPHKNRGSNDSKKQPPLSLKTRQNDDSEKQQSLSLNSR), and 454 to 490 (ESSGTSTSLLSQTKLTGYSRRQTPSANNRYDEPCEQG). Positions 28-46 (AISDPTTPPSSSQASPSSS) are enriched in low complexity. Residues 455–469 (SSGTSTSLLSQTKLT) are compositionally biased toward low complexity. The span at 472–481 (SRRQTPSANN) shows a compositional bias: polar residues. LRR repeat units lie at residues 1447 to 1470 (KLESGQTTISMSPTEIIPENNYED), 1499 to 1522 (FSHLSELEMGDNPVETSNCIVLSN), 1542 to 1565 (SIQIASLGFLENLISILWYRSHNL), 1566 to 1588 (AILRQINLVKHLLVTLQRGDVEV), and 2001 to 2024 (SSEMKSLDLTGSSSQVQPIDSRSS). Disordered stretches follow at residues 1992–2023 (GDHVGSVSASSEMKSLDLTGSSSQVQPIDSRS) and 2046–2081 (IPSPSKSSTISTPHPSHISVSEFDASSDQSSGSQGS). The segment covering 1998–2020 (VSASSEMKSLDLTGSSSQVQPID) has biased composition (polar residues). LRR repeat units lie at residues 2128-2151 (TEQIKAVQALESILEMLPLYVDPE), 2221-2247 (LLSILQLANKDGRVEEVTSSGKGLLSI), and 2313-2336 (VSAVLQLLVANKNIILCPSNLDTD). The tract at residues 2658 to 2680 (VNTDEKSETGSPIKSSSGKMDEI) is disordered. Over residues 2666 to 2675 (TGSPIKSSSG) the composition is skewed to polar residues. Residues 2704 to 2871 (EHLEKIRFRY…EREEVFRNLL (168 aa)) form the BEACH-type PH domain. A BEACH domain is found at 2896 to 3188 (GSRLFKLMAK…QLFQKPHVKR (293 aa)). 4 WD repeats span residues 3272-3311 (HEGNQIQCAGVSHDGRIVVTGAEDGLVSVWRVSKDGPRGS), 3322-3361 (AHTAKVICLRVSQPYMMIASSSDDCTVIIWDLSSLSFVRQ), 3410-3451 (DLIV…DPVS), and 3483-3522 (FHKQPVTSLHLTTDLKQLLSGDSAGHLLSWTVPDEILKAS).

This Arabidopsis thaliana (Mouse-ear cress) protein is BEACH domain-containing protein A2.